A 397-amino-acid polypeptide reads, in one-letter code: ATP-dependent RNA helicase eIF4A (397 aa).

The short motif at 23–51 (YTFDDLNLKPNIVRGIFGYGYESPSAIQQ) is the Q motif element. The 171-residue stretch at 54-224 (ILPITEGRDV…TKFMNNPVRI (171 aa)) folds into the Helicase ATP-binding domain. 67–74 (AQSGTGKT) contributes to the ATP binding site. The DEAD box motif lies at 172–175 (DEAD). The Helicase C-terminal domain maps to 235–396 (GIKQFYINVE…EMPADIGALF (162 aa)).

It belongs to the DEAD box helicase family. eIF4A subfamily. In terms of assembly, component of the eIF4F complex, which composition varies with external and internal environmental conditions. It is composed of at least eIF4A, eIF4E and eIF4G.

The protein resides in the cytoplasm. It carries out the reaction ATP + H2O = ADP + phosphate + H(+). ATP-dependent RNA helicase which is a subunit of the eIF4F complex involved in cap recognition and is required for mRNA binding to ribosome. In the current model of translation initiation, eIF4A unwinds RNA secondary structures in the 5'-UTR of mRNAs which is necessary to allow efficient binding of the small ribosomal subunit, and subsequent scanning for the initiator codon. The sequence is that of ATP-dependent RNA helicase eIF4A (TIF1) from Debaryomyces hansenii (strain ATCC 36239 / CBS 767 / BCRC 21394 / JCM 1990 / NBRC 0083 / IGC 2968) (Yeast).